Consider the following 351-residue polypeptide: MAEAEYFIWTNPEGDFEKEFGNITGMLPTGDYFIPCKRVPITNRQALVVFYALVSLLSLLGNSLVMLVILYRRRTRSVMDVYVLNLAIADLLFSLTLPFLAVSKLKGWIFGTPLCKMVSLLKEFNFFSGILLLACISVDRYLAIVHATRTLARKRYLVKFVCVGIWGLSLILSLPFAIFRQAYKPFRSGTVCYEVLGEATTDFRMTLRGLSHIFGFLLPLLTMLVCYGLTLRMLFKTHMRQKHRAMGVIFAVVLVFLLCCLPYNLVLLSDTLLGAHLIEDTCERRNDIDQALYITEILGFSHSCLNPIIYAFVGQNFRHEFLKILANHGLVRKEVLTHRRVAFHTSLTAIY.

Over Met-1 to Arg-44 the chain is Extracellular. N-linked (GlcNAc...) asparagine glycosylation is present at Asn-22. The helical transmembrane segment at Gln-45 to Tyr-71 threads the bilayer. Residues Arg-72–Asp-80 are Cytoplasmic-facing. Residues Val-81–Ala-101 traverse the membrane as a helical segment. The Extracellular portion of the chain corresponds to Val-102 to Lys-116. Cys-115 and Cys-192 are oxidised to a cystine. The chain crosses the membrane as a helical span at residues Met-117–Val-138. Over Asp-139 to Lys-159 the chain is Cytoplasmic. The chain crosses the membrane as a helical span at residues Phe-160 to Phe-179. The Extracellular portion of the chain corresponds to Arg-180–Arg-204. A helical transmembrane segment spans residues Met-205–Val-225. Residues Cys-226–Gly-247 lie on the Cytoplasmic side of the membrane. Residues Val-248–Ser-269 form a helical membrane-spanning segment. Residues Asp-270–Gln-290 are Extracellular-facing. Residues Ala-291–Val-313 form a helical membrane-spanning segment. Residues Gly-314–Tyr-351 lie on the Cytoplasmic side of the membrane.

Belongs to the G-protein coupled receptor 1 family. In terms of assembly, interacts with IL8. Interacts with GNAI2.

The protein resides in the cell membrane. Receptor to interleukin-8, which is a powerful neutrophils chemotactic factor. Binding of IL-8 to the receptor causes activation of neutrophils. This response is mediated via a G-protein that activates a phosphatidylinositol-calcium second messenger system. The protein is C-X-C chemokine receptor type 1 (Cxcr1) of Mus musculus (Mouse).